We begin with the raw amino-acid sequence, 141 residues long: Hemoglobin subunit alpha-A (141 aa).

Residues 1–141 (VLSAADKANV…VGAVLTAKYR (141 aa)) enclose the Globin domain. An O2-binding site is contributed by H58. A heme b-binding site is contributed by H87.

This sequence belongs to the globin family. In terms of assembly, heterotetramer of two alpha chains and two beta chains. In terms of tissue distribution, red blood cells.

In terms of biological role, involved in oxygen transport from the lung to the various peripheral tissues. In Chloephaga melanoptera (Andean goose), this protein is Hemoglobin subunit alpha-A (HBAA).